The following is a 745-amino-acid chain: uncharacterized protein (745 aa).

Residues 158–256 form the HTH araC/xylS-type domain; it reads NQVCDYIELH…HQTPKQYRGD (99 aa). 2 consecutive DNA-binding regions (H-T-H motif) follow at residues 175–196 and 223–246; these read SELSEYVGWSESHLSKKFAESL and ITDIALQNGFSSAASFARTFKHIT.

This is an uncharacterized protein from Staphylococcus aureus.